We begin with the raw amino-acid sequence, 389 residues long: MNIHEYQAKAVLAKYGVPVPSGHAAFTPEEAVAKAKELGGPVWVVKAQIHAGGRGKAGGVKVVKSLDDVKKEATRLIGSTLVTHQTGPDGKEVNRLYIEDGSSISRELYLSILVDRATSRVSFIVSTEGGMDIEEVAKKTPEKILSFSVDPASGISGFHGRKVAYALGLEGDQVKQGVALIEKLYKAFVTEDMSMLEINPLVVTGEGNLLCLDAKVNFDSNALYRHKDIVELRDLTEEDPAEVEASKYDLNYIKLDGKIGCMVNGAGLAMATMDIIKLYGSEPANFLDVGGGATKEKVTAAFKIILSDPSVEGILVNIFGGIMRCDIIAEGVIAAAKEVSLSVPLVVRLEGTNVDLGKKIMAESGLPIISADNLADAAEKIVKAVKEAA.

One can recognise an ATP-grasp domain in the interval 9-244 (KAVLAKYGVP…LTEEDPAEVE (236 aa)). ATP-binding positions include Lys46, 53 to 55 (GRG), Glu99, Ser102, and Glu107. Positions 199 and 213 each coordinate Mg(2+). Residues Asn264 and 321–323 (GIM) contribute to the substrate site.

This sequence belongs to the succinate/malate CoA ligase beta subunit family. As to quaternary structure, heterotetramer of two alpha and two beta subunits. The cofactor is Mg(2+).

The enzyme catalyses succinate + ATP + CoA = succinyl-CoA + ADP + phosphate. The catalysed reaction is GTP + succinate + CoA = succinyl-CoA + GDP + phosphate. The protein operates within carbohydrate metabolism; tricarboxylic acid cycle; succinate from succinyl-CoA (ligase route): step 1/1. Functionally, succinyl-CoA synthetase functions in the citric acid cycle (TCA), coupling the hydrolysis of succinyl-CoA to the synthesis of either ATP or GTP and thus represents the only step of substrate-level phosphorylation in the TCA. The beta subunit provides nucleotide specificity of the enzyme and binds the substrate succinate, while the binding sites for coenzyme A and phosphate are found in the alpha subunit. In Parvibaculum lavamentivorans (strain DS-1 / DSM 13023 / NCIMB 13966), this protein is Succinate--CoA ligase [ADP-forming] subunit beta.